The primary structure comprises 381 residues: Cytochrome b (381 aa).

Helical transmembrane passes span 33–53 (FGSLLGICLIIQILTGLFLAM), 77–98 (WLLRNLHANGASMFFMCLFLHV), 113–133 (WNIGVILLLTVMATAFVGYVL), and 178–198 (FFAFHFILPFIIVAFAAVHLL). Heme b-binding residues include His83 and His97. 2 residues coordinate heme b: His182 and His196. An a ubiquinone-binding site is contributed by His201. Transmembrane regions (helical) follow at residues 226 to 246 (IKDALGLIFLILSLLLLGLFS), 288 to 308 (LGGVLALLASILILLIIPLLH), 320 to 340 (IFQTLFWILTADLITLTWIGG), and 347 to 367 (FIIIGQLALMLYFLLILALMP).

This sequence belongs to the cytochrome b family. In terms of assembly, the cytochrome bc1 complex contains 11 subunits: 3 respiratory subunits (MT-CYB, CYC1 and UQCRFS1), 2 core proteins (UQCRC1 and UQCRC2) and 6 low-molecular weight proteins (UQCRH/QCR6, UQCRB/QCR7, UQCRQ/QCR8, UQCR10/QCR9, UQCR11/QCR10 and a cleavage product of UQCRFS1). This cytochrome bc1 complex then forms a dimer. Requires heme b as cofactor.

It localises to the mitochondrion inner membrane. Component of the ubiquinol-cytochrome c reductase complex (complex III or cytochrome b-c1 complex) that is part of the mitochondrial respiratory chain. The b-c1 complex mediates electron transfer from ubiquinol to cytochrome c. Contributes to the generation of a proton gradient across the mitochondrial membrane that is then used for ATP synthesis. The protein is Cytochrome b (MT-CYB) of Dasykaluta rosamondae (Little red marsupial mouse).